The chain runs to 391 residues: Multidrug resistance protein MdtL (391 aa).

The next 12 membrane-spanning stretches (helical) occupy residues 4-24, 42-62, 69-89, 93-113, 131-151, 158-178, 203-222, 245-265, 269-289, 293-313, 331-351, and 356-376; these read FLIC…MYLV, IAFS…GKVA, PVAI…SLAE, LFLA…VVAF, LLNG…HLIM, SLFW…LFIL, FFLS…LTFV, ALTA…LGIF, TLMI…AVSP, VSLF…GVAM, LGIA…VVGI, and MLIG…MFVA.

The protein belongs to the major facilitator superfamily. DHA1 family. MdtL (TC 2.A.1.2.22) subfamily.

The protein localises to the cell inner membrane. In terms of biological role, confers resistance to chloramphenicol. This chain is Multidrug resistance protein MdtL, found in Escherichia coli O45:K1 (strain S88 / ExPEC).